A 423-amino-acid polypeptide reads, in one-letter code: Transcription factor AP-2-epsilon (423 aa).

A disordered region spans residues methionine 1–histidine 108. Positions glycine 14–leucine 27 are enriched in low complexity. The PPxY motif motif lies at tyrosine 50–tyrosine 55. The segment covering glutamine 57–tyrosine 70 has biased composition (low complexity). Residues serine 79–serine 93 show a composition bias toward polar residues. Residues arginine 276–aspartate 405 form an H-S-H (helix-span-helix), dimerization region.

The protein belongs to the AP-2 family. In terms of assembly, binds DNA as a dimer. Can form homodimers or heterodimers with other AP-2 family members.

It is found in the nucleus. Sequence-specific DNA-binding protein that interacts with inducible viral and cellular enhancer elements to regulate transcription of selected genes. AP-2 factors bind to the consensus sequence 5'-GCCNNNGGC-3' and activate genes involved in a large spectrum of important biological functions. The polypeptide is Transcription factor AP-2-epsilon (Danio rerio (Zebrafish)).